Reading from the N-terminus, the 401-residue chain is UPF0283 membrane protein SO_1811 (401 aa).

The tract at residues 1 to 22 is disordered; it reads MSVELLPHSTEPHANGADKSVS. Helical transmembrane passes span 99 to 119, 129 to 149, and 239 to 259; these read LARL…VLGL, LFSF…VGVI, and ESAV…IILW.

The protein belongs to the UPF0283 family.

The protein resides in the cell inner membrane. In Shewanella oneidensis (strain ATCC 700550 / JCM 31522 / CIP 106686 / LMG 19005 / NCIMB 14063 / MR-1), this protein is UPF0283 membrane protein SO_1811.